Here is a 72-residue protein sequence, read N- to C-terminus: DNA-directed RNA polymerase subunit omega (72 aa).

Belongs to the RNA polymerase subunit omega family. In terms of assembly, the RNAP catalytic core consists of 2 alpha, 1 beta, 1 beta' and 1 omega subunit. When a sigma factor is associated with the core the holoenzyme is formed, which can initiate transcription.

It carries out the reaction RNA(n) + a ribonucleoside 5'-triphosphate = RNA(n+1) + diphosphate. Promotes RNA polymerase assembly. Latches the N- and C-terminal regions of the beta' subunit thereby facilitating its interaction with the beta and alpha subunits. The sequence is that of DNA-directed RNA polymerase subunit omega from Francisella tularensis subsp. holarctica (strain LVS).